The primary structure comprises 429 residues: Glutamate-1-semialdehyde 2,1-aminomutase (429 aa).

K265 bears the N6-(pyridoxal phosphate)lysine mark.

It belongs to the class-III pyridoxal-phosphate-dependent aminotransferase family. HemL subfamily. In terms of assembly, homodimer. Pyridoxal 5'-phosphate serves as cofactor.

Its subcellular location is the cytoplasm. It catalyses the reaction (S)-4-amino-5-oxopentanoate = 5-aminolevulinate. It functions in the pathway porphyrin-containing compound metabolism; protoporphyrin-IX biosynthesis; 5-aminolevulinate from L-glutamyl-tRNA(Glu): step 2/2. The sequence is that of Glutamate-1-semialdehyde 2,1-aminomutase from Legionella pneumophila subsp. pneumophila (strain Philadelphia 1 / ATCC 33152 / DSM 7513).